We begin with the raw amino-acid sequence, 471 residues long: Probable lysophospholipase BODYGUARD 2 (471 aa).

The signal sequence occupies residues 1–45 (MGIARWLNRTVGFFVFALLDIADFLLCYTYKTLDYFLESERKPCY). A lipid anchor (N-palmitoyl cysteine) is attached at Cys-46. One can recognise an AB hydrolase-1 domain in the interval 193 to 296 (VVFIHGFVSS…AIKSLTLLAP (104 aa)). His-197 is an active-site residue. Ser-271 (nucleophile) is an active-site residue. Residues Asp-418 and His-446 each act as charge relay system in the active site.

It is found in the cell membrane. The protein resides in the secreted. The protein localises to the cell wall. Involved in cuticle development and morphogenesis. The protein is Probable lysophospholipase BODYGUARD 2 of Arabidopsis thaliana (Mouse-ear cress).